Reading from the N-terminus, the 398-residue chain is Pheromone receptor transcription activator (398 aa).

Disordered stretches follow at residues Met-1–Asp-30, Thr-101–Tyr-125, and Pro-254–Pro-317. The region spanning Gly-20 to Phe-74 is the MADS-box domain. A compositionally biased stretch (low complexity) spans Ser-106 to Ser-121. 2 stretches are compositionally biased toward polar residues: residues Thr-262–Ser-273 and Asn-282–Pro-294.

The protein localises to the nucleus. In response to mating-pheromone signaling or nitrogen starvation, it interacts with mat1-Pc. This activates the expression of one of two mating-type-specific genes sxa2 or map3, which leads to inactivation of the P-factor. May also interact with mat1-Mc. This Schizosaccharomyces pombe (strain 972 / ATCC 24843) (Fission yeast) protein is Pheromone receptor transcription activator (map1).